Consider the following 456-residue polypeptide: Asparagine--tRNA ligase (456 aa).

This sequence belongs to the class-II aminoacyl-tRNA synthetase family. In terms of assembly, homodimer.

The protein localises to the cytoplasm. It catalyses the reaction tRNA(Asn) + L-asparagine + ATP = L-asparaginyl-tRNA(Asn) + AMP + diphosphate + H(+). In Mycoplasmoides gallisepticum (strain R(low / passage 15 / clone 2)) (Mycoplasma gallisepticum), this protein is Asparagine--tRNA ligase.